The primary structure comprises 306 residues: Probable pinoresinol-lariciresinol reductase 3 (306 aa).

NADP(+)-binding positions include 14–20, Arg-39, and Lys-46; that span reads GATGRLG. The active-site Proton acceptor is the Lys-131. Residue Arg-135 coordinates NADP(+).

The protein belongs to the NmrA-type oxidoreductase family. Isoflavone reductase subfamily. As to quaternary structure, dimer.

In terms of biological role, probable reductase that might be involved in the reduction of lariciresinol into secoisolariciresinol. In most plant species, a single enzyme is able to reduce both pinoresinol and lariciresinol efficiently while in Arabidopsis, PRR1 and PRR2 show a strict substrate selectivity for pinoresinol. This is Probable pinoresinol-lariciresinol reductase 3 (PLR3) from Arabidopsis thaliana (Mouse-ear cress).